A 116-amino-acid chain; its full sequence is Beta-D-galactosidase Rv1717 (116 aa).

The region spanning 40–107 (LSVYRPGGTA…TDRQALLLVT (68 aa)) is the Cupin type-2 domain.

It localises to the secreted. The protein resides in the cell wall. It carries out the reaction Hydrolysis of terminal non-reducing beta-D-galactose residues in beta-D-galactosides.. Beta-galactosidase activity is activated by Mg(2+) and significantly inhibited by Ca(2+), Cd(2+), Fe(2+), Ni(2+), Cu(2+) and Zn(2+). Inhibited by EDTA. Functionally, beta-D-galactopyranosidase that specifically recognizes the beta-glycosidic bonds formed with beta-D-galactopyranose (beta-D-Gal) or N-acetylgalactosamine (beta-D-GalNAc). May target the galactoside linkages in the exopolysaccharide component of the mycobacterial extracellular polymeric substance (EPS) and help dispersal of Mtb bacteria from a deteriorating biofilm. This is Beta-D-galactosidase Rv1717 from Mycobacterium tuberculosis (strain ATCC 25618 / H37Rv).